We begin with the raw amino-acid sequence, 2590 residues long: 5-methylorsellinic acid synthase (2590 aa).

Residues 6 to 255 (LLCGSQAIQW…HNQVNRELFA (250 aa)) form an N-terminal acylcarrier protein transacylase domain (SAT) region. Residues 369–784 (GDSIAIVGMG…GSNAALIVTQ (416 aa)) enclose the Ketosynthase family 3 (KS3) domain. Active-site for beta-ketoacyl synthase activity residues include Cys-534, His-669, and His-707. A malonyl-CoA:ACP transacylase (MAT) domain region spans residues 891–1191 (LAFGGQTGNV…HAVNLGGPEP (301 aa)). Ser-978 (for acyl/malonyl transferase activity) is an active-site residue. An N-terminal hotdog fold region spans residues 1263–1393 (PKLVSFVKYL…GTVNISSLTS (131 aa)). Residues 1263-1569 (PKLVSFVKYL…FAKVPTASLK (307 aa)) enclose the PKS/mFAS DH domain. A product template (PT) domain region spans residues 1267–1568 (SFVKYLDSNR…RFAKVPTASL (302 aa)). His-1297 (proton acceptor; for dehydratase activity) is an active-site residue. Positions 1421 to 1569 (TSAIQGSLVY…FAKVPTASLK (149 aa)) are C-terminal hotdog fold. The Proton donor; for dehydratase activity role is filled by Asp-1481. Residues 1587–1612 (LKVTEPSANVPKAQPVSTYPKPMKPA) are disordered. Carrier domains are found at residues 1617 to 1691 (AQIR…ASGT) and 1736 to 1812 (SAQA…IPKP). O-(pantetheine 4'-phosphoryl)serine occurs at positions 1651 and 1772. The interval 1980–2212 (QHRGEHKLLN…GFRHVDWSDD (233 aa)) is methyltransferase (CMeT) domain. The segment at 2282-2590 (LMIHGGGHIM…EGYEFLLRHL (309 aa)) is thioesterase (TE) domain.

The catalysed reaction is 3 malonyl-CoA + acetyl-CoA + S-adenosyl-L-methionine + H(+) = 5-methylorsellinate + S-adenosyl-L-homocysteine + 3 CO2 + 4 CoA. It participates in secondary metabolite biosynthesis. Its function is as follows. Non-reducing polyketide synthase; part of the cluster A that mediates the biosynthesis of azasperpyranones, members of the azaphilone family that exhibit anti-cancer activities. Azasperpyranones are synthesized by 2 clusters, A and B. Cluster A is responsible for the production of the polyhydric phenol moiety while the azaphilonoid scaffold is produced by the cluster B. The non-reducing polyketide synthase ATEG_03629 produces 5-methyl orsellinic acid, which is then reduced to 5-methyl orsellinic aldehyde by the NRPS-like protein ATEG_03630. 5-methyl orsellinic aldehyde is then first hydroxylated by the FAD-dependent monooxygenase ATEG_03635 and subsequently hydroxylated by the cytochrome P450 monooxygenase ATEG_03631 to produce the unstable polyhydric phenol precursor of azasperpyranones. On the other hand, the polyketide synthase ATEG_07659 is responsible for producing the 3,5-dimethyloctadienone moiety from acetyl-CoA, three malonyl-CoA, and two S-adenosyl methionines (SAM). The 3,5-dimethyloctadienone moiety is then loaded onto the SAT domain of ATEG_07661 and extended with four malonyl-CoA and one SAM, which leads to the formation of 2,4-dihydroxy-6-(5,7-dimethyl-2-oxo-trans-3-trans-5-nonadienyl)-3-methylbenzaldehyde (compound 8) after reductive release and aldol condensation. The FAD-dependent monooxygenase ATEG_07662 is the next enzyme in the biosynthesis sequence and hydroxylates the side chain at the benzylic position of compound 8. In Aspergillus nidulans, afoF, the ortholog of the FAD-dependent oxygenase ATEG_07660, is the key enzyme for the biosynthesis of asperfuranone by catalyzing the hydroxylation at C-8 of to prevent the formation of a six-membered ring hemiacetal intermediate and thus facilitating the formation of a five-membered ring to produce asperfuranone. In Aspergillus terreus, ATEG_07660 is probably not functional, which leads to the formation of the six-membered ring hemiacetal intermediate presperpyranone instead of asperfuranone. Finally, ATEG_03636 is involved in the condensation of the polyhydric phenol moiety produced by cluster A and the perasperpyranone precursor produced by cluster B, to yield azasperpyranone A. Further modifications of azasperpyranone A result in the production of derivatives, including azasperpyranone B to F. The sequence is that of 5-methylorsellinic acid synthase from Aspergillus terreus (strain NIH 2624 / FGSC A1156).